Consider the following 282-residue polypeptide: Putative hydrolase BceJ2315_61450 (282 aa).

Mg(2+)-binding residues include Glu124, Glu126, and Asp155.

The protein belongs to the FAH family. It depends on Mg(2+) as a cofactor.

The polypeptide is Putative hydrolase BceJ2315_61450 (Burkholderia cenocepacia (strain ATCC BAA-245 / DSM 16553 / LMG 16656 / NCTC 13227 / J2315 / CF5610) (Burkholderia cepacia (strain J2315))).